Consider the following 428-residue polypeptide: 3-phosphoshikimate 1-carboxyvinyltransferase (428 aa).

3-phosphoshikimate contacts are provided by Lys-22, Ser-23, and Arg-27. Residue Lys-22 participates in phosphoenolpyruvate binding. Phosphoenolpyruvate-binding residues include Gly-96 and Arg-124. Ser-171, Ser-172, Gln-173, Ser-198, Asp-311, and Lys-338 together coordinate 3-phosphoshikimate. Gln-173 is a binding site for phosphoenolpyruvate. Catalysis depends on Asp-311, which acts as the Proton acceptor. Phosphoenolpyruvate contacts are provided by Arg-342 and Arg-383.

It belongs to the EPSP synthase family. Monomer.

It is found in the cytoplasm. It carries out the reaction 3-phosphoshikimate + phosphoenolpyruvate = 5-O-(1-carboxyvinyl)-3-phosphoshikimate + phosphate. It participates in metabolic intermediate biosynthesis; chorismate biosynthesis. Its function is as follows. Catalyzes the transfer of the enolpyruvyl moiety of phosphoenolpyruvate (PEP) to the 5-hydroxyl of shikimate-3-phosphate (S3P) to produce enolpyruvyl shikimate-3-phosphate and inorganic phosphate. This is 3-phosphoshikimate 1-carboxyvinyltransferase from Methanopyrus kandleri (strain AV19 / DSM 6324 / JCM 9639 / NBRC 100938).